The chain runs to 861 residues: Probable beta-glucosidase A (861 aa).

A signal peptide spans Met1–Ala19. 3 N-linked (GlcNAc...) asparagine glycosylation sites follow: Asn62, Asn212, and Asn253. Asp281 is a catalytic residue. Asn316, Asn323, Asn355, Asn443, Asn524, Asn543, Asn565, Asn669, Asn713, and Asn846 each carry an N-linked (GlcNAc...) asparagine glycan.

It belongs to the glycosyl hydrolase 3 family.

The protein localises to the secreted. The catalysed reaction is Hydrolysis of terminal, non-reducing beta-D-glucosyl residues with release of beta-D-glucose.. Its pathway is glycan metabolism; cellulose degradation. Its function is as follows. Beta-glucosidases are one of a number of cellulolytic enzymes involved in the degradation of cellulosic biomass. Catalyzes the last step releasing glucose from the inhibitory cellobiose. The sequence is that of Probable beta-glucosidase A (bglA) from Aspergillus flavus (strain ATCC 200026 / FGSC A1120 / IAM 13836 / NRRL 3357 / JCM 12722 / SRRC 167).